Reading from the N-terminus, the 46-residue chain is uncharacterized protein (46 aa).

This is an uncharacterized protein from Dictyostelium discoideum (Social amoeba).